Reading from the N-terminus, the 490-residue chain is Aspartyl/glutamyl-tRNA(Asn/Gln) amidotransferase subunit B (490 aa).

Belongs to the GatB/GatE family. GatB subfamily. Heterotrimer of A, B and C subunits.

The enzyme catalyses L-glutamyl-tRNA(Gln) + L-glutamine + ATP + H2O = L-glutaminyl-tRNA(Gln) + L-glutamate + ADP + phosphate + H(+). It carries out the reaction L-aspartyl-tRNA(Asn) + L-glutamine + ATP + H2O = L-asparaginyl-tRNA(Asn) + L-glutamate + ADP + phosphate + 2 H(+). Functionally, allows the formation of correctly charged Asn-tRNA(Asn) or Gln-tRNA(Gln) through the transamidation of misacylated Asp-tRNA(Asn) or Glu-tRNA(Gln) in organisms which lack either or both of asparaginyl-tRNA or glutaminyl-tRNA synthetases. The reaction takes place in the presence of glutamine and ATP through an activated phospho-Asp-tRNA(Asn) or phospho-Glu-tRNA(Gln). The polypeptide is Aspartyl/glutamyl-tRNA(Asn/Gln) amidotransferase subunit B (Burkholderia ambifaria (strain MC40-6)).